We begin with the raw amino-acid sequence, 264 residues long: MQQYLDLMKHILAEGVDKSDRTGTGTRSVFGYQMRFDLSKGFPLVTTKKCHMRSIIHELLWFLKGDTNIAYLRDNKVSIWDEWADENGDLGPVYGAQWRSWPTQSGEAIDQISQVIAQIKSQPDSRRLIVSAWNVGELDKMALAPCHAFFQFYVADGKLSCQLYQRSCDVFLGLPFNIASYALLTMMVAQQCDLALGDFVWTGGDTHLYSNHMEQTALQLSREPRPLPTMTILRKPASIFDYQFDDFALSNYDPHPHIKAPVAV.

Arg-21 lines the dUMP pocket. His-51 contacts (6R)-5,10-methylene-5,6,7,8-tetrahydrofolate. 126-127 (RR) contacts dUMP. Catalysis depends on Cys-146, which acts as the Nucleophile. DUMP is bound by residues 166 to 169 (RSCD), Asn-177, and 207 to 209 (HLY). Residue Asp-169 participates in (6R)-5,10-methylene-5,6,7,8-tetrahydrofolate binding. Ala-263 serves as a coordination point for (6R)-5,10-methylene-5,6,7,8-tetrahydrofolate.

It belongs to the thymidylate synthase family. Bacterial-type ThyA subfamily. In terms of assembly, homodimer.

The protein localises to the cytoplasm. The catalysed reaction is dUMP + (6R)-5,10-methylene-5,6,7,8-tetrahydrofolate = 7,8-dihydrofolate + dTMP. It functions in the pathway pyrimidine metabolism; dTTP biosynthesis. In terms of biological role, catalyzes the reductive methylation of 2'-deoxyuridine-5'-monophosphate (dUMP) to 2'-deoxythymidine-5'-monophosphate (dTMP) while utilizing 5,10-methylenetetrahydrofolate (mTHF) as the methyl donor and reductant in the reaction, yielding dihydrofolate (DHF) as a by-product. This enzymatic reaction provides an intracellular de novo source of dTMP, an essential precursor for DNA biosynthesis. This is Thymidylate synthase from Shewanella oneidensis (strain ATCC 700550 / JCM 31522 / CIP 106686 / LMG 19005 / NCIMB 14063 / MR-1).